Reading from the N-terminus, the 889-residue chain is Exocyst complex component 1 (889 aa).

Residues Ser145 and Ser148 each carry the phosphoserine modification. Residues 156–269 adopt a coiled-coil conformation; it reads RAVQKTQHMD…GHVKETMEKI (114 aa). Ser456 is subject to Phosphoserine.

The protein belongs to the SEC3 family. In terms of assembly, the exocyst complex is composed of Sec3/Exoc1, Sec5/Exoc2, Sec6/Exoc3, Sec8/Exoc4, Sec10/Exoc5, Sec15/Exoc6, Exo70/Exoc7 and Exo84/Exoc8.

Component of the exocyst complex involved in the docking of exocytic vesicles with fusion sites on the plasma membrane. The polypeptide is Exocyst complex component 1 (Drosophila melanogaster (Fruit fly)).